Consider the following 695-residue polypeptide: Lysophospholipase 2 (695 aa).

Positions 1–19 (MQLSVLIASVLAAGAAVDA) are cleaved as a signal peptide. Residues Asn26, Asn72, Asn83, Asn115, Asn152, Asn171, Asn207, Asn269, Asn335, Asn379, Asn480, Asn504, Asn513, Asn532, Asn556, Asn573, Asn620, Asn626, Asn644, and Asn648 are each glycosylated (N-linked (GlcNAc...) asparagine). In terms of domain architecture, PLA2c spans 28–577 (SCPDNANFIR…TNYCWNGTID (550 aa)). Positions 612-662 (NTGSGTKSNSSSKTNSTLVTSSRATSTGTLISNSSSNSTVSSTAARSSTSS) are disordered.

Belongs to the lysophospholipase family.

Its subcellular location is the secreted. It is found in the cell wall. The catalysed reaction is a 1-acyl-sn-glycero-3-phosphocholine + H2O = sn-glycerol 3-phosphocholine + a fatty acid + H(+). Catalyzes the release of fatty acids from lysophospholipids. Phospholipase B may well contribute to pathogenicity by abetting the fungus in damaging and traversing host cell membranes, processes which likely increase the rapidity of disseminated infection. The sequence is that of Lysophospholipase 2 from Candida glabrata (strain ATCC 2001 / BCRC 20586 / JCM 3761 / NBRC 0622 / NRRL Y-65 / CBS 138) (Yeast).